A 110-amino-acid chain; its full sequence is Phosphoribosyl-ATP pyrophosphatase (110 aa).

This sequence belongs to the PRA-PH family.

The protein localises to the cytoplasm. The catalysed reaction is 1-(5-phospho-beta-D-ribosyl)-ATP + H2O = 1-(5-phospho-beta-D-ribosyl)-5'-AMP + diphosphate + H(+). It participates in amino-acid biosynthesis; L-histidine biosynthesis; L-histidine from 5-phospho-alpha-D-ribose 1-diphosphate: step 2/9. This chain is Phosphoribosyl-ATP pyrophosphatase, found in Pseudomonas syringae pv. tomato (strain ATCC BAA-871 / DC3000).